Consider the following 224-residue polypeptide: Zinc finger C4H2 domain-containing protein (224 aa).

Residues 11–104 (LESIKEIRNK…RRLHDEYKPL (94 aa)) adopt a coiled-coil conformation. The segment at 189–206 (CLSCHQQIHRNAPICPLC) adopts a C4H2-type zinc-finger fold.

As to expression, expressed in fetal tissues, including in brain, intestine, lung, kidney and muscle. Isoform 1 is expressed in numerous fetal brain regions. Isoform 3 is highly expressed in numerous fetal brain regions and spinal cord.

The protein localises to the cytoplasm. Its subcellular location is the nucleus. The protein resides in the postsynaptic cell membrane. Functionally, plays a role in interneurons differentiation. Involved in neuronal development and in neuromuscular junction formation. The protein is Zinc finger C4H2 domain-containing protein (ZC4H2) of Homo sapiens (Human).